The following is a 33-amino-acid chain: AVGGIPTDEEQATGLEEIVMVAAQXGADXYDVM.

This sequence belongs to the cytochrome c oxidase subunit 5B family. In terms of assembly, component of the cytochrome c oxidase (complex IV, CIV), a multisubunit enzyme composed of 14 subunits. The complex is composed of a catalytic core of 3 subunits MT-CO1, MT-CO2 and MT-CO3, encoded in the mitochondrial DNA, and 11 supernumerary subunits COX4I, COX5A, COX5B, COX6A, COX6B, COX6C, COX7A, COX7B, COX7C, COX8 and NDUFA4, which are encoded in the nuclear genome. The complex exists as a monomer or a dimer and forms supercomplexes (SCs) in the inner mitochondrial membrane with NADH-ubiquinone oxidoreductase (complex I, CI) and ubiquinol-cytochrome c oxidoreductase (cytochrome b-c1 complex, complex III, CIII), resulting in different assemblies (supercomplex SCI(1)III(2)IV(1) and megacomplex MCI(2)III(2)IV(2)).

It is found in the mitochondrion inner membrane. Its pathway is energy metabolism; oxidative phosphorylation. Its function is as follows. Component of the cytochrome c oxidase, the last enzyme in the mitochondrial electron transport chain which drives oxidative phosphorylation. The respiratory chain contains 3 multisubunit complexes succinate dehydrogenase (complex II, CII), ubiquinol-cytochrome c oxidoreductase (cytochrome b-c1 complex, complex III, CIII) and cytochrome c oxidase (complex IV, CIV), that cooperate to transfer electrons derived from NADH and succinate to molecular oxygen, creating an electrochemical gradient over the inner membrane that drives transmembrane transport and the ATP synthase. Cytochrome c oxidase is the component of the respiratory chain that catalyzes the reduction of oxygen to water. Electrons originating from reduced cytochrome c in the intermembrane space (IMS) are transferred via the dinuclear copper A center (CU(A)) of subunit 2 and heme A of subunit 1 to the active site in subunit 1, a binuclear center (BNC) formed by heme A3 and copper B (CU(B)). The BNC reduces molecular oxygen to 2 water molecules using 4 electrons from cytochrome c in the IMS and 4 protons from the mitochondrial matrix. The protein is Cytochrome c oxidase subunit 5B liver, mitochondrial of Oncorhynchus mykiss (Rainbow trout).